A 375-amino-acid polypeptide reads, in one-letter code: Alcohol dehydrogenase 1 (375 aa).

Ser2 is modified (N-acetylserine). Zn(2+)-binding residues include Cys47, His68, Cys98, Cys101, Cys104, Cys112, and Cys175. NAD(+) contacts are provided by residues 200–205 (WSGRVG), Asp224, and Lys229. The residue at position 234 (Lys234) is an N6-succinyllysine. 293-295 (VGV) lines the NAD(+) pocket. Position 340 is an N6-succinyllysine (Lys340). Arg370 is a binding site for NAD(+).

This sequence belongs to the zinc-containing alcohol dehydrogenase family. Class-I subfamily. In terms of assembly, homodimer. The cofactor is Zn(2+).

It is found in the cytoplasm. The enzyme catalyses a primary alcohol + NAD(+) = an aldehyde + NADH + H(+). It catalyses the reaction a secondary alcohol + NAD(+) = a ketone + NADH + H(+). The polypeptide is Alcohol dehydrogenase 1 (ADH1) (Geomys bursarius (Plains pocket gopher)).